A 1762-amino-acid polypeptide reads, in one-letter code: Lysine-specific demethylase 3B (1762 aa).

N-acetylalanine is present on Ala2. Disordered stretches follow at residues 253-350 and 426-468; these read MDSS…FVPQ and TTAS…NSSL. A compositionally biased stretch (basic and acidic residues) spans 299 to 310; the sequence is ATKKLKGDRGEV. Over residues 426 to 435 the composition is skewed to low complexity; it reads TTASSTPTTV. Positions 453–465 are enriched in polar residues; the sequence is GSWSQASGENSRN. 4 positions are modified to phosphoserine: Ser493, Ser547, Ser557, and Ser561. Residues 574-613 are disordered; that stretch reads SVLGADTQPGPKAGSSVDRKVPAESMPTLTPAFPRSLLNT. Thr615 is subject to Phosphothreonine. The span at 713-746 shows a compositional bias: polar residues; sequence TGSPSLSAVGNGRSSSPTNSLTQPIEMPTLSSSP. The tract at residues 713–763 is disordered; it reads TGSPSLSAVGNGRSSSPTNSLTQPIEMPTLSSSPTEERPTVGPGQQDNPLL. Phosphoserine occurs at positions 767, 774, and 779. A Glycyl lysine isopeptide (Lys-Gly) (interchain with G-Cter in SUMO2) cross-link involves residue Lys789. Ser799 is modified (phosphoserine). Residues 806–853 form a disordered region; sequence ACRQDSDSSTNSDLSDLSDSEEQLQAKSGLKGIPEHLMGKLGPNGERS. The C6-type zinc finger occupies 1032–1057; that stretch reads CDVCETTLFNIHWVCRKCGFGVCLDC. The segment covering 1146-1163 has biased composition (polar residues); the sequence is QLPSVTPSASSGNETTFS. A disordered region spans residues 1146 to 1217; sequence QLPSVTPSAS…AIRPPCPDTA (72 aa). Phosphoserine occurs at positions 1254 and 1260. The interval 1285 to 1306 is disordered; the sequence is SNSKTEGSSLRDLLHSGPGKLP. Residues 1294–1298 carry the LXXLL motif motif; it reads LRDLL. One can recognise a JmjC domain in the interval 1499–1722; the sequence is MPTRFEDLME…HCFRLTQEFR (224 aa). The Fe cation site is built by His1561, Asp1563, and His1690.

The protein belongs to the JHDM2 histone demethylase family. Requires Fe(2+) as cofactor.

Its subcellular location is the nucleus. The enzyme catalyses N(6),N(6)-dimethyl-L-lysyl(9)-[histone H3] + 2 2-oxoglutarate + 2 O2 = L-lysyl(9)-[histone H3] + 2 formaldehyde + 2 succinate + 2 CO2. In terms of biological role, histone demethylase that specifically demethylates 'Lys-9' of histone H3, thereby playing a central role in histone code. Demethylation of Lys residue generates formaldehyde and succinate May have tumor suppressor activity. This Mus musculus (Mouse) protein is Lysine-specific demethylase 3B (Kdm3b).